We begin with the raw amino-acid sequence, 480 residues long: Protein nucleotidyltransferase YdiU (480 aa).

Residues glycine 86, glycine 88, arginine 89, lysine 109, aspartate 121, glycine 122, arginine 172, and arginine 179 each contribute to the ATP site. Aspartate 248 serves as the catalytic Proton acceptor. The Mg(2+) site is built by asparagine 249 and aspartate 258. Residue aspartate 258 coordinates ATP.

It belongs to the SELO family. It depends on Mg(2+) as a cofactor. Mn(2+) is required as a cofactor.

It carries out the reaction L-seryl-[protein] + ATP = 3-O-(5'-adenylyl)-L-seryl-[protein] + diphosphate. The catalysed reaction is L-threonyl-[protein] + ATP = 3-O-(5'-adenylyl)-L-threonyl-[protein] + diphosphate. It catalyses the reaction L-tyrosyl-[protein] + ATP = O-(5'-adenylyl)-L-tyrosyl-[protein] + diphosphate. The enzyme catalyses L-histidyl-[protein] + UTP = N(tele)-(5'-uridylyl)-L-histidyl-[protein] + diphosphate. It carries out the reaction L-seryl-[protein] + UTP = O-(5'-uridylyl)-L-seryl-[protein] + diphosphate. The catalysed reaction is L-tyrosyl-[protein] + UTP = O-(5'-uridylyl)-L-tyrosyl-[protein] + diphosphate. In terms of biological role, nucleotidyltransferase involved in the post-translational modification of proteins. It can catalyze the addition of adenosine monophosphate (AMP) or uridine monophosphate (UMP) to a protein, resulting in modifications known as AMPylation and UMPylation. This Klebsiella pneumoniae (strain 342) protein is Protein nucleotidyltransferase YdiU.